Consider the following 239-residue polypeptide: Ribosomal RNA small subunit methyltransferase G (239 aa).

Residues Gly78, Phe83, 129 to 130 (AE), and Arg148 contribute to the S-adenosyl-L-methionine site.

The protein belongs to the methyltransferase superfamily. RNA methyltransferase RsmG family.

The protein resides in the cytoplasm. Specifically methylates the N7 position of a guanine in 16S rRNA. The chain is Ribosomal RNA small subunit methyltransferase G from Clostridium botulinum (strain ATCC 19397 / Type A).